The chain runs to 137 residues: Small ribosomal subunit protein uS11 (137 aa).

Positions 116–137 are disordered; sequence EDVTPIPHDGTRPKGGRRGRRV.

The protein belongs to the universal ribosomal protein uS11 family. As to quaternary structure, part of the 30S ribosomal subunit.

Its function is as follows. Located on the platform of the 30S subunit. This is Small ribosomal subunit protein uS11 from Pyrococcus furiosus (strain ATCC 43587 / DSM 3638 / JCM 8422 / Vc1).